Here is a 165-residue protein sequence, read N- to C-terminus: Chorismate pyruvate-lyase (165 aa).

Positions 35, 77, 115, and 156 each coordinate substrate.

This sequence belongs to the UbiC family. In terms of assembly, monomer.

It is found in the cytoplasm. The enzyme catalyses chorismate = 4-hydroxybenzoate + pyruvate. It participates in cofactor biosynthesis; ubiquinone biosynthesis. Removes the pyruvyl group from chorismate, with concomitant aromatization of the ring, to provide 4-hydroxybenzoate (4HB) for the ubiquinone pathway. In Escherichia coli (strain K12 / MC4100 / BW2952), this protein is Chorismate pyruvate-lyase.